We begin with the raw amino-acid sequence, 75 residues long: Phytosulfokines 3 (75 aa).

The signal sequence occupies residues 1–22; sequence MSPKVIAICLVALLLPISISHG. The propeptide occupies 23–66; it reads GRIGPIEPSKASSKVVERGNYDGRVEGCEEDDCLVERLLVAHLD. Residues Tyr67 and Tyr69 each carry the sulfotyrosine modification. A propeptide spanning residues 72-75 is cleaved from the precursor; sequence GKHN.

Belongs to the phytosulfokine family. Sulfation is important for activity and for the binding to a putative membrane receptor. Post-translationally, PSK-alpha is produced by endopeptidase digestion. PSK-beta is produced from PSK-alpha by exopeptidase digestion.

The protein localises to the secreted. Its function is as follows. Promotes plant cell differentiation, organogenesis and somatic embryogenesis as well as cell proliferation. The protein is Phytosulfokines 3 (PSK3) of Oryza sativa subsp. japonica (Rice).